Here is a 375-residue protein sequence, read N- to C-terminus: Glycogen synthase kinase-3 homolog YGK3 (375 aa).

In terms of domain architecture, Protein kinase spans 41–329; it reads VREGKRIGHG…ARQLMAHEFF (289 aa). Residues 47–55 and K74 contribute to the ATP site; that span reads IGHGSFGTV. D173 (proton acceptor) is an active-site residue. S211 is modified (phosphoserine).

This sequence belongs to the protein kinase superfamily. Ser/Thr protein kinase family.

It catalyses the reaction L-seryl-[protein] + ATP = O-phospho-L-seryl-[protein] + ADP + H(+). The catalysed reaction is L-threonyl-[protein] + ATP = O-phospho-L-threonyl-[protein] + ADP + H(+). Required for heat stress-instigated phosphorylation of BCY1 which is involved in cell wall integrity signaling. Regulates activity of MSN2, a transcription factor that binds to the stress-response element (STRE). Probably promotes formation of a complex between MSN2 and DNA. Regulates the stability of ROG1. This Saccharomyces cerevisiae (strain ATCC 204508 / S288c) (Baker's yeast) protein is Glycogen synthase kinase-3 homolog YGK3 (YGK3).